A 119-amino-acid polypeptide reads, in one-letter code: Protein RALF-like 22 (119 aa).

The signal sequence occupies residues 1–23 (MTNTRAIYAVIAILAIVISAVES). Positions 24–70 (TGDFGDSLDFVRAGSSSLFSGCTGSIAECIAEEEEMEFDSDISRRIL) are cleaved as a propeptide — removed in mature form. Intrachain disulfides connect Cys-88–Cys-98 and Cys-111–Cys-117.

It belongs to the plant rapid alkalinization factor (RALF) family. Post-translationally, proteolytically cleaved, probably by S1P, a subtilisin-like serine protease (subtilase).

It localises to the secreted. Its function is as follows. Cell signaling peptide that may regulate plant stress, growth, and development. Mediates a rapid alkalinization of extracellular space by mediating a transient increase in the cytoplasmic Ca(2+) concentration leading to a calcium-dependent signaling events through a cell surface receptor and a concomitant activation of some intracellular mitogen-activated protein kinases. The protein is Protein RALF-like 22 (RALFL22) of Arabidopsis thaliana (Mouse-ear cress).